The primary structure comprises 425 residues: Trigger factor (425 aa).

The region spanning 163-248 (GDTAVIDFEG…VHEIKTKELP (86 aa)) is the PPIase FKBP-type domain.

Belongs to the FKBP-type PPIase family. Tig subfamily.

It is found in the cytoplasm. It carries out the reaction [protein]-peptidylproline (omega=180) = [protein]-peptidylproline (omega=0). Its function is as follows. Involved in protein export. Acts as a chaperone by maintaining the newly synthesized protein in an open conformation. Functions as a peptidyl-prolyl cis-trans isomerase. This Bacillus anthracis (strain A0248) protein is Trigger factor.